The following is a 380-amino-acid chain: Cytochrome b (380 aa).

Helical transmembrane passes span 34 to 54 (FGSLLGICLATQILTGLLLAA), 78 to 99 (WLIRNLHANGASFFFICIYLHI), 114 to 134 (WNTGVILLLTLMATAFVGYVL), and 179 to 199 (FFTLHFLLPFMIMGLTLIHLT). Positions 84 and 98 each coordinate heme b. Positions 183 and 197 each coordinate heme b. H202 provides a ligand contact to a ubiquinone. The next 4 membrane-spanning stretches (helical) occupy residues 227-247 (LKDILGFTLMLLPLMTLALFS), 289-309 (LGGVLALAASVLILFLAPLLH), 321-341 (FSQLLFWTLAANLLILTWVGS), and 348-368 (FIIIGQLASLTYFTILLILFP).

Belongs to the cytochrome b family. As to quaternary structure, the cytochrome bc1 complex contains 11 subunits: 3 respiratory subunits (MT-CYB, CYC1 and UQCRFS1), 2 core proteins (UQCRC1 and UQCRC2) and 6 low-molecular weight proteins (UQCRH/QCR6, UQCRB/QCR7, UQCRQ/QCR8, UQCR10/QCR9, UQCR11/QCR10 and a cleavage product of UQCRFS1). This cytochrome bc1 complex then forms a dimer. Requires heme b as cofactor.

The protein localises to the mitochondrion inner membrane. Its function is as follows. Component of the ubiquinol-cytochrome c reductase complex (complex III or cytochrome b-c1 complex) that is part of the mitochondrial respiratory chain. The b-c1 complex mediates electron transfer from ubiquinol to cytochrome c. Contributes to the generation of a proton gradient across the mitochondrial membrane that is then used for ATP synthesis. This Antigone antigone (Sarus crane) protein is Cytochrome b (MT-CYB).